Reading from the N-terminus, the 387-residue chain is MGIKGLSQLILDEAKDSVKEDQLKNYFGRKVAIDASMAMYQFLIALKNTGMDLTDKDGEVTNHLQGLLARTTKMLEYGIKPCYVFDGKPPQLKSGELEKRKERQKEAMEQFALAQEEGDEEKMVMWNKRTTRMTKEQSNDGKKLLRLMGVPVVEAPGEAEAQCAELCKGGLVYATATEDMDALTYATPVLARHLTFSEARKQPIQEFTFKQVIEGLGVTVDQFIDICILCGCDYTDSIKGIGPKKALAMIKKYGNIENLLKNIEGKHYQAPSEFPYEEVRNIFKNPDVTPSSELVDTMKWTEPDEEGLIEFLVKEKQFDEERVRGYIKRIKSSRGKPTQTRLDGFFTPVASSSTTKKKAPAKKDDKKSATDKKRKAADASTSSKKKK.

The segment at 1–104 (MGIKGLSQLI…GELEKRKERQ (104 aa)) is N-domain. Mg(2+) is bound at residue D34. R70 contacts DNA. 5 residues coordinate Mg(2+): D86, E158, E160, D179, and D181. The interval 122–253 (KMVMWNKRTT…KKALAMIKKY (132 aa)) is I-domain. E158 contacts DNA. DNA contacts are provided by G231 and D233. Residue D233 coordinates Mg(2+). Positions 332 to 387 (SSRGKPTQTRLDGFFTPVASSSTTKKKAPAKKDDKKSATDKKRKAADASTSSKKKK) are disordered. Residues 338–346 (TQTRLDGFF) form an interaction with PCNA region. Positions 361-371 (AKKDDKKSATD) are enriched in basic and acidic residues. The span at 378-387 (DASTSSKKKK) shows a compositional bias: low complexity.

Belongs to the XPG/RAD2 endonuclease family. FEN1 subfamily. As to quaternary structure, interacts with PCNA. Three molecules of FEN1 bind to one PCNA trimer with each molecule binding to one PCNA monomer. PCNA stimulates the nuclease activity without altering cleavage specificity. The cofactor is Mg(2+). Phosphorylated. Phosphorylation upon DNA damage induces relocalization to the nuclear plasma.

The protein resides in the nucleus. The protein localises to the nucleolus. Its subcellular location is the nucleoplasm. It is found in the mitochondrion. Functionally, structure-specific nuclease with 5'-flap endonuclease and 5'-3' exonuclease activities involved in DNA replication and repair. During DNA replication, cleaves the 5'-overhanging flap structure that is generated by displacement synthesis when DNA polymerase encounters the 5'-end of a downstream Okazaki fragment. It enters the flap from the 5'-end and then tracks to cleave the flap base, leaving a nick for ligation. Also involved in the long patch base excision repair (LP-BER) pathway, by cleaving within the apurinic/apyrimidinic (AP) site-terminated flap. Acts as a genome stabilization factor that prevents flaps from equilibrating into structures that lead to duplications and deletions. Also possesses 5'-3' exonuclease activity on nicked or gapped double-stranded DNA, and exhibits RNase H activity. Also involved in replication and repair of rDNA and in repairing mitochondrial DNA. The protein is Flap endonuclease 1 of Naegleria gruberi (Amoeba).